The sequence spans 1673 residues: Protein-methionine sulfoxide oxidase mical3b (1673 aa).

The interval 2–492 (WDGQSEMCQA…RHLIDTGEGP (491 aa)) is monooxygenase domain. FAD is bound by residues Cys-96, 96–124 (CGLR…SRNN), Glu-115, Arg-117, Arg-122, Asn-124, and Asp-396. Residues 512-618 (MARYSKLLSW…YLSQLHELLK (107 aa)) enclose the Calponin-homology (CH) domain. The segment at 647–714 (SKLGQSLSRK…PKASEGHSKV (68 aa)) is disordered. Residues 661–671 (DKKEKEADSVG) show a composition bias toward basic and acidic residues. An LIM zinc-binding domain is found at 791 to 853 (DVCYFCGRRV…KHHFSFRLAS (63 aa)). Residues 882–892 (LSSLGSVGTAT) are compositionally biased toward low complexity. 5 disordered regions span residues 882 to 901 (LSSL…SSTH), 918 to 938 (RIEL…LQEV), 951 to 1100 (SLQE…KRSE), 1159 to 1188 (QSAR…TDGD), and 1357 to 1393 (GPDA…RETG). Over residues 973–992 (LVWKKGEELHARTNGERKLD) the composition is skewed to basic and acidic residues. Composition is skewed to acidic residues over residues 993–1002 (LEEELKEEEG) and 1010–1041 (EGEE…DPDI). Residues 1081 to 1094 (SDLTPDPSTTPESS) are compositionally biased toward low complexity. Residues 1159 to 1182 (QSARICDSSTQTHSVTDLQETSPL) show a composition bias toward polar residues. 2 coiled-coil regions span residues 1475–1531 (EEEL…AVEK) and 1573–1638 (QEKN…VEQR). A bMERB domain is found at 1495-1661 (KQEELRRLHR…EKEEDSDLEA (167 aa)).

It belongs to the Mical family. It depends on FAD as a cofactor.

Its subcellular location is the cytoplasm. It is found in the cytoskeleton. The protein localises to the nucleus. The enzyme catalyses L-methionyl-[F-actin] + NADPH + O2 + H(+) = L-methionyl-(R)-S-oxide-[F-actin] + NADP(+) + H2O. Monooxygenase that promotes depolymerization of F-actin by mediating oxidation of specific methionine residues on actin. Acts by modifying actin subunits through the addition of oxygen to form methionine-sulfoxide, leading to promote actin filament severing and prevent repolymerization. Involved in exocytic vesicles tethering and fusion: the monooxygenase activity is required for this process. The protein is Protein-methionine sulfoxide oxidase mical3b (mical3b) of Danio rerio (Zebrafish).